A 254-amino-acid chain; its full sequence is Pyrroloquinoline-quinone synthase (254 aa).

Belongs to the PqqC family.

The catalysed reaction is 6-(2-amino-2-carboxyethyl)-7,8-dioxo-1,2,3,4,7,8-hexahydroquinoline-2,4-dicarboxylate + 3 O2 = pyrroloquinoline quinone + 2 H2O2 + 2 H2O + H(+). It participates in cofactor biosynthesis; pyrroloquinoline quinone biosynthesis. Functionally, ring cyclization and eight-electron oxidation of 3a-(2-amino-2-carboxyethyl)-4,5-dioxo-4,5,6,7,8,9-hexahydroquinoline-7,9-dicarboxylic-acid to PQQ. The sequence is that of Pyrroloquinoline-quinone synthase from Rhodopseudomonas palustris (strain TIE-1).